The sequence spans 517 residues: Maturase K (517 aa).

It belongs to the intron maturase 2 family. MatK subfamily.

It is found in the plastid. The protein localises to the chloroplast. Usually encoded in the trnK tRNA gene intron. Probably assists in splicing its own and other chloroplast group II introns. The protein is Maturase K of Trillium grandiflorum (Large-flowered trillium).